A 138-amino-acid polypeptide reads, in one-letter code: Large ribosomal subunit protein bL17 (138 aa).

This sequence belongs to the bacterial ribosomal protein bL17 family. Part of the 50S ribosomal subunit. Contacts protein L32.

In Halorhodospira halophila (strain DSM 244 / SL1) (Ectothiorhodospira halophila (strain DSM 244 / SL1)), this protein is Large ribosomal subunit protein bL17.